We begin with the raw amino-acid sequence, 97 residues long: Large ribosomal subunit protein bL28 (97 aa).

The protein belongs to the bacterial ribosomal protein bL28 family.

This is Large ribosomal subunit protein bL28 from Rickettsia bellii (strain OSU 85-389).